We begin with the raw amino-acid sequence, 189 residues long: Crossover junction endodeoxyribonuclease RuvC (189 aa).

Catalysis depends on residues D11, E71, and D143. D11, E71, and D143 together coordinate Mg(2+).

It belongs to the RuvC family. Homodimer which binds Holliday junction (HJ) DNA. The HJ becomes 2-fold symmetrical on binding to RuvC with unstacked arms; it has a different conformation from HJ DNA in complex with RuvA. In the full resolvosome a probable DNA-RuvA(4)-RuvB(12)-RuvC(2) complex forms which resolves the HJ. Mg(2+) is required as a cofactor.

It localises to the cytoplasm. The enzyme catalyses Endonucleolytic cleavage at a junction such as a reciprocal single-stranded crossover between two homologous DNA duplexes (Holliday junction).. Functionally, the RuvA-RuvB-RuvC complex processes Holliday junction (HJ) DNA during genetic recombination and DNA repair. Endonuclease that resolves HJ intermediates. Cleaves cruciform DNA by making single-stranded nicks across the HJ at symmetrical positions within the homologous arms, yielding a 5'-phosphate and a 3'-hydroxyl group; requires a central core of homology in the junction. The consensus cleavage sequence is 5'-(A/T)TT(C/G)-3'. Cleavage occurs on the 3'-side of the TT dinucleotide at the point of strand exchange. HJ branch migration catalyzed by RuvA-RuvB allows RuvC to scan DNA until it finds its consensus sequence, where it cleaves and resolves the cruciform DNA. The chain is Crossover junction endodeoxyribonuclease RuvC from Methylorubrum populi (strain ATCC BAA-705 / NCIMB 13946 / BJ001) (Methylobacterium populi).